Consider the following 377-residue polypeptide: MAMKRAIGLMSGTSLDGIDVALIESDGERIRLVKSANGLVAPLGPTGYRGYAEAERALLREATRDAEGLRARTDRPGRLAEAEDFVARAHAEAIEAFLAQNDLRPEDIDVVGFHGQTVIHRPKLGLTVQLGDGAALAKRLGIRVVSDMRANDVAQGGQGAPLVPVFHKALAEAAGFTGPLGILNIGGLANATLIDSGGNMLAFDTGPGNGPINDWMKERTGQDFDEGGATAARGTVDEDLLENLLGHPLILRAPPKSLDRNWFSHRLAGYLTVEDGAVTLTAFTAHAVARSLAFASERPARWIVGGGGAKNRTLMVMLERLLAAEVLNADAIGWSSDFLEAQAFAYLALRSLEGLPLTYPTTTGVAAPVTGGIVSEP.

12-19 (GTSLDGID) lines the ATP pocket.

It belongs to the anhydro-N-acetylmuramic acid kinase family.

The catalysed reaction is 1,6-anhydro-N-acetyl-beta-muramate + ATP + H2O = N-acetyl-D-muramate 6-phosphate + ADP + H(+). Its pathway is amino-sugar metabolism; 1,6-anhydro-N-acetylmuramate degradation. It functions in the pathway cell wall biogenesis; peptidoglycan recycling. Functionally, catalyzes the specific phosphorylation of 1,6-anhydro-N-acetylmuramic acid (anhMurNAc) with the simultaneous cleavage of the 1,6-anhydro ring, generating MurNAc-6-P. Is required for the utilization of anhMurNAc either imported from the medium or derived from its own cell wall murein, and thus plays a role in cell wall recycling. This is Anhydro-N-acetylmuramic acid kinase from Methylorubrum extorquens (strain CM4 / NCIMB 13688) (Methylobacterium extorquens).